Consider the following 266-residue polypeptide: Undecaprenyl-diphosphatase (266 aa).

7 consecutive transmembrane segments (helical) span residues 41-61 (NLAF…VVLW), 80-100 (TKYV…GVFF), 107-127 (IFGS…ALLA), 140-160 (ISMK…MPGL), 180-200 (LAQF…LLDV), 213-233 (IPAL…CVAC), and 245-265 (LIYF…CTLL).

Belongs to the UppP family.

It is found in the cell inner membrane. The catalysed reaction is di-trans,octa-cis-undecaprenyl diphosphate + H2O = di-trans,octa-cis-undecaprenyl phosphate + phosphate + H(+). Catalyzes the dephosphorylation of undecaprenyl diphosphate (UPP). Confers resistance to bacitracin. The protein is Undecaprenyl-diphosphatase of Parabacteroides distasonis (strain ATCC 8503 / DSM 20701 / CIP 104284 / JCM 5825 / NCTC 11152).